A 73-amino-acid chain; its full sequence is Antimicrobial peptide 143 (73 aa).

A signal peptide spans 1 to 22 (MKVKCLLAVFLIVLIAAEHCQA). Lys-38 bears the Lysine amide mark. The propeptide occupies 44 to 73 (ELGTQFRPQQKNFMRREIDLERLFAEMPDY).

It belongs to the non-disulfide-bridged peptide (NDBP) superfamily. Short antimicrobial peptide (group 4) family. As to expression, expressed by the venom gland.

It is found in the secreted. It localises to the target cell membrane. Cationic host defense peptide that have antibacterial activity by breaking membranes. Is more effective on Gram-positive than on Gram-negative bacteria. The chain is Antimicrobial peptide 143 from Lychas mucronatus (Chinese swimming scorpion).